We begin with the raw amino-acid sequence, 384 residues long: 5-amino-6-(D-ribitylamino)uracil--L-tyrosine 4-hydroxyphenyl transferase 2 (384 aa).

A Radical SAM core domain is found at 53 to 286 (VSYVVNRNIY…IAISRVILHT (234 aa)). [4Fe-4S] cluster-binding residues include C67, C71, and C74.

Belongs to the radical SAM superfamily. CofH family. In terms of assembly, consists of two subunits, CofG and CofH. The cofactor is [4Fe-4S] cluster.

The enzyme catalyses 5-amino-6-(D-ribitylamino)uracil + L-tyrosine + S-adenosyl-L-methionine = 5-amino-5-(4-hydroxybenzyl)-6-(D-ribitylimino)-5,6-dihydrouracil + 2-iminoacetate + 5'-deoxyadenosine + L-methionine + H(+). The protein operates within cofactor biosynthesis; coenzyme F0 biosynthesis. Functionally, catalyzes the radical-mediated synthesis of 5-amino-5-(4-hydroxybenzyl)-6-(D-ribitylimino)-5,6-dihydrouracil from 5-amino-6-(D-ribitylamino)uracil and L-tyrosine. In Methanosarcina mazei (strain ATCC BAA-159 / DSM 3647 / Goe1 / Go1 / JCM 11833 / OCM 88) (Methanosarcina frisia), this protein is 5-amino-6-(D-ribitylamino)uracil--L-tyrosine 4-hydroxyphenyl transferase 2.